Here is a 442-residue protein sequence, read N- to C-terminus: Histidine--tRNA ligase (442 aa).

The protein belongs to the class-II aminoacyl-tRNA synthetase family. In terms of assembly, homodimer.

Its subcellular location is the cytoplasm. It carries out the reaction tRNA(His) + L-histidine + ATP = L-histidyl-tRNA(His) + AMP + diphosphate + H(+). This chain is Histidine--tRNA ligase, found in Helicobacter pylori (strain P12).